The sequence spans 289 residues: MQKVIVVTGLSGAGKSTVSKALEDLGYVVVDNVPVDLLHNLLELYEAKNQEQLVAVVVDSRSLRHQGEVSKFVADLKDLKNRMPLDVIFLEASTDTLLSRFNLTRHLHPLVHATGSRIALIEAIEREKELMSELRDVSDVVLDTTGMKERDLVYQVENFIGKDRGPEFYLISFSYQRGLPTNADMIYDARVFQNPYYVDELRTLTGLDDSVAEYVRADHNYGRFLDLWVELAERSYNEHIKMGKPYLVIGVGCTGGQHRSVLVVRDLSDQLTKNGHKVITWHRELGSVN.

Residue 9–16 (GLSGAGKS) participates in ATP binding. 59–62 (DSRS) provides a ligand contact to GTP.

This sequence belongs to the RapZ-like family.

Its function is as follows. Displays ATPase and GTPase activities. The chain is Nucleotide-binding protein COPRO5265_0725 from Coprothermobacter proteolyticus (strain ATCC 35245 / DSM 5265 / OCM 4 / BT).